We begin with the raw amino-acid sequence, 267 residues long: Non-homologous end joining protein Ku (267 aa).

Residues 11–195 enclose the Ku domain; the sequence is AVGQVSCAVA…KVKGEMLELA (185 aa). The interval 229–267 is disordered; the sequence is GRKPKRKAAPKKAREPSDLMAALRESVAATERPRRRKAG.

This sequence belongs to the prokaryotic Ku family. Homodimer. Interacts with LigD.

With LigD forms a non-homologous end joining (NHEJ) DNA repair enzyme, which repairs dsDNA breaks with reduced fidelity. Binds linear dsDNA with 5'- and 3'- overhangs but not closed circular dsDNA nor ssDNA. Recruits and stimulates the ligase activity of LigD. The chain is Non-homologous end joining protein Ku from Cereibacter sphaeroides (strain KD131 / KCTC 12085) (Rhodobacter sphaeroides).